Here is a 96-residue protein sequence, read N- to C-terminus: (4S)-4-hydroxy-5-phosphonooxypentane-2,3-dione isomerase (96 aa).

The region spanning 2–91 (HVTLVEINVK…MTGPRKKTTF (90 aa)) is the ABM domain.

This sequence belongs to the LsrG family. Homodimer.

It localises to the cytoplasm. It catalyses the reaction (2S)-2-hydroxy-3,4-dioxopentyl phosphate = 3-hydroxy-2,4-dioxopentyl phosphate. Its function is as follows. Involved in the degradation of phospho-AI-2, thereby terminating induction of the lsr operon and closing the AI-2 signaling cycle. Catalyzes the conversion of (4S)-4-hydroxy-5-phosphonooxypentane-2,3-dione (P-DPD) to 3-hydroxy-5-phosphonooxypentane-2,4-dione (P-HPD). This chain is (4S)-4-hydroxy-5-phosphonooxypentane-2,3-dione isomerase, found in Yersinia enterocolitica serotype O:8 / biotype 1B (strain NCTC 13174 / 8081).